The sequence spans 86 residues: uncharacterized protein (86 aa).

Transmembrane regions (helical) follow at residues 4 to 24 (ILII…IAAV), 34 to 54 (MGLV…ILIN), and 64 to 84 (DIAY…ARVL).

The protein to M.jannaschii MJ1223.

It is found in the cell membrane. This is an uncharacterized protein from Methanothermobacter thermautotrophicus (strain ATCC 29096 / DSM 1053 / JCM 10044 / NBRC 100330 / Delta H) (Methanobacterium thermoautotrophicum).